The chain runs to 282 residues: E3 ubiquitin-protein ligase RNF217 (282 aa).

A TRIAD supradomain region spans residues 1–218; it reads MSCRVCLEDR…LSIFGCKYRY (218 aa). Residues Cys3, Cys6, Cys23, Cys26, Cys123, Cys126, His131, Cys136, Cys163, and Cys166 each contribute to the Zn(2+) site. The RING-type 1 zinc-finger motif lies at 3–49; it reads CRVCLEDRSIKPLPCCKKPVCDECLKRYLSSQVQLGQAEIQCPITEC. The IBR-type zinc-finger motif lies at 68–136; that stretch reads IKYKYFLELS…HAPWHEGVNC (69 aa). The RING-type 2; atypical zinc finger occupies 163-192; that stretch reads CPRCKVHIQRTEGCDHMTCSQCNTNFCYRC. Residue Cys176 is part of the active site. Zn(2+)-binding residues include Cys181, Cys184, Cys189, Cys192, His205, and Cys214. Residues 243–263 form a helical membrane-spanning segment; it reads LLIVLGLVLGALAVVIGLFGL.

Belongs to the RBR family. RNF217 subfamily.

It localises to the cytoplasm. The protein localises to the membrane. The enzyme catalyses [E2 ubiquitin-conjugating enzyme]-S-ubiquitinyl-L-cysteine + [acceptor protein]-L-lysine = [E2 ubiquitin-conjugating enzyme]-L-cysteine + [acceptor protein]-N(6)-ubiquitinyl-L-lysine.. It functions in the pathway protein modification; protein ubiquitination. E3 ubiquitin-protein ligase which accepts ubiquitin from E2 ubiquitin-conjugating enzymes in the form of a thioester and then directly transfers the ubiquitin to targeted substrates. Mediates the degradation of the iron exporter ferroportin/SLC40A1 and thus regulates iron homeostasis. This chain is E3 ubiquitin-protein ligase RNF217 (rnf217), found in Xenopus laevis (African clawed frog).